Here is a 180-residue protein sequence, read N- to C-terminus: Pro-glucagon (180 aa).

A signal peptide spans 1-20 (MKTIYFVAGLFVMLVQGSWQ). The tract at residues 25-59 (NTEEKSRSFPAPQTDPLDDPDQMTEDKRHSQGTFT) is disordered. A Phosphoserine modification is found at Ser54. Residues 84–89 (NKNNIA) constitute a propeptide that is removed on maturation. Phosphoserine is present on residues Ser105 and Ser108. Arg127 bears the Arginine amide mark. A propeptide spanning residues 131-145 (DFPEEVTIVEELRRR) is cleaved from the precursor. Phosphoserine is present on residues Ser150 and Ser152.

Belongs to the glucagon family. In terms of processing, proglucagon is post-translationally processed in a tissue-specific manner in pancreatic A cells and intestinal L cells. In pancreatic A cells, the major bioactive hormone is glucagon cleaved by PCSK2/PC2. In the intestinal L cells PCSK1/PC1 liberates GLP-1, GLP-2, glicentin and oxyntomodulin. GLP-1 is further N-terminally truncated by post-translational processing in the intestinal L cells resulting in GLP-1(7-37) GLP-1-(7-36)amide. The C-terminal amidation is neither important for the metabolism of GLP-1 nor for its effects on the endocrine pancreas. Glucagon is secreted in the A cells of the islets of Langerhans. GLP-1, GLP-2, oxyntomodulin and glicentin are secreted from enteroendocrine cells throughout the gastrointestinal tract. GLP-1 and GLP-2 are also secreted in selected neurons in the brain.

It localises to the secreted. Functionally, plays a key role in glucose metabolism and homeostasis. Regulates blood glucose by increasing gluconeogenesis and decreasing glycolysis. A counterregulatory hormone of insulin, raises plasma glucose levels in response to insulin-induced hypoglycemia. Plays an important role in initiating and maintaining hyperglycemic conditions in diabetes. Potent stimulator of glucose-dependent insulin release. Also stimulates insulin release in response to IL6. Plays important roles on gastric motility and the suppression of plasma glucagon levels. May be involved in the suppression of satiety and stimulation of glucose disposal in peripheral tissues, independent of the actions of insulin. Has growth-promoting activities on intestinal epithelium. May also regulate the hypothalamic pituitary axis (HPA) via effects on LH, TSH, CRH, oxytocin, and vasopressin secretion. Increases islet mass through stimulation of islet neogenesis and pancreatic beta cell proliferation. Inhibits beta cell apoptosis. Its function is as follows. Stimulates intestinal growth and up-regulates villus height in the small intestine, concomitant with increased crypt cell proliferation and decreased enterocyte apoptosis. The gastrointestinal tract, from the stomach to the colon is the principal target for GLP-2 action. Plays a key role in nutrient homeostasis, enhancing nutrient assimilation through enhanced gastrointestinal function, as well as increasing nutrient disposal. Stimulates intestinal glucose transport and decreases mucosal permeability. In terms of biological role, significantly reduces food intake. Inhibits gastric emptying in humans. Suppression of gastric emptying may lead to increased gastric distension, which may contribute to satiety by causing a sensation of fullness. Functionally, may modulate gastric acid secretion and the gastro-pyloro-duodenal activity. May play an important role in intestinal mucosal growth in the early period of life. This chain is Pro-glucagon (GCG), found in Sus scrofa (Pig).